The primary structure comprises 297 residues: Undecaprenyl-diphosphatase (297 aa).

Transmembrane regions (helical) follow at residues 39–59 (PGAA…LIYF), 85–105 (ARLA…GLTL), 113–133 (FRSL…LLVV), 151–171 (GILI…RSGT), 190–210 (SFLL…KHLL), 220–240 (ALWV…AWLL), and 249–269 (LVFV…LQTG).

It belongs to the UppP family.

Its subcellular location is the cell inner membrane. The catalysed reaction is di-trans,octa-cis-undecaprenyl diphosphate + H2O = di-trans,octa-cis-undecaprenyl phosphate + phosphate + H(+). In terms of biological role, catalyzes the dephosphorylation of undecaprenyl diphosphate (UPP). Confers resistance to bacitracin. This is Undecaprenyl-diphosphatase from Myxococcus xanthus (strain DK1622).